A 338-amino-acid polypeptide reads, in one-letter code: Ketol-acid reductoisomerase (NADP(+)) (338 aa).

The region spanning 1–181 is the KARI N-terminal Rossmann domain; sequence MRVFYDKDCD…GGGRTGIIET (181 aa). Residues 24–27, Arg-47, Ser-50, Thr-52, and 82–85 each bind NADP(+); these read YGSQ and DEFQ. His-107 is a catalytic residue. Gly-133 lines the NADP(+) pocket. The 146-residue stretch at 182 to 327 folds into the KARI C-terminal knotted domain; the sequence is TFKDETETDL…EKLRAMMPWI (146 aa). 4 residues coordinate Mg(2+): Asp-190, Glu-194, Glu-226, and Glu-230. Ser-251 serves as a coordination point for substrate.

Belongs to the ketol-acid reductoisomerase family. Requires Mg(2+) as cofactor.

The catalysed reaction is (2R)-2,3-dihydroxy-3-methylbutanoate + NADP(+) = (2S)-2-acetolactate + NADPH + H(+). It catalyses the reaction (2R,3R)-2,3-dihydroxy-3-methylpentanoate + NADP(+) = (S)-2-ethyl-2-hydroxy-3-oxobutanoate + NADPH + H(+). It functions in the pathway amino-acid biosynthesis; L-isoleucine biosynthesis; L-isoleucine from 2-oxobutanoate: step 2/4. The protein operates within amino-acid biosynthesis; L-valine biosynthesis; L-valine from pyruvate: step 2/4. In terms of biological role, involved in the biosynthesis of branched-chain amino acids (BCAA). Catalyzes an alkyl-migration followed by a ketol-acid reduction of (S)-2-acetolactate (S2AL) to yield (R)-2,3-dihydroxy-isovalerate. In the isomerase reaction, S2AL is rearranged via a Mg-dependent methyl migration to produce 3-hydroxy-3-methyl-2-ketobutyrate (HMKB). In the reductase reaction, this 2-ketoacid undergoes a metal-dependent reduction by NADPH to yield (R)-2,3-dihydroxy-isovalerate. The sequence is that of Ketol-acid reductoisomerase (NADP(+)) from Pseudomonas paraeruginosa (strain DSM 24068 / PA7) (Pseudomonas aeruginosa (strain PA7)).